We begin with the raw amino-acid sequence, 237 residues long: Small ribosomal subunit protein eS4 (237 aa).

In terms of domain architecture, S4 RNA-binding spans 37–99; sequence VPLLIVLRDV…REEYYRIFPD (63 aa).

The protein belongs to the eukaryotic ribosomal protein eS4 family.

This chain is Small ribosomal subunit protein eS4, found in Natronomonas pharaonis (strain ATCC 35678 / DSM 2160 / CIP 103997 / JCM 8858 / NBRC 14720 / NCIMB 2260 / Gabara) (Halobacterium pharaonis).